The sequence spans 125 residues: DNA-directed RNA polymerase II subunit RPB9 (125 aa).

Residue methionine 1 is modified to N-acetylmethionine. Cysteine 17, cysteine 20, cysteine 39, cysteine 42, cysteine 86, cysteine 89, cysteine 114, and cysteine 119 together coordinate Zn(2+). The segment at 17–42 (CQECNNMLYPKEDKENRILLYACRNC) adopts a C4-type zinc-finger fold. The TFIIS-type zinc finger occupies 82–124 (EDHPCQKCGHKEAVFFQSHSARAEDAMRLYYVCTAPHCGHRWT).

Belongs to the archaeal RpoM/eukaryotic RPA12/RPB9/RPC11 RNA polymerase family. As to quaternary structure, component of the RNA polymerase II (Pol II) core complex consisting of 12 subunits: a ten-subunit catalytic core composed of POLR2A/RPB1, POLR2B/RPB2, POLR2C/RPB3, POLR2I/RPB9, POLR2J/RPB11, POLR2E/RPABC1, POLR2F/RPABC2, POLR2H/RPABC3, POLR2K/RPABC4 and POLR2L/RPABC5 and a mobile stalk composed of two subunits POLR2D/RPB4 and POLR2G/RPB7, protruding from the core and functioning primarily in transcription initiation. Part of Pol II(G) complex, in which Pol II core associates with an additional subunit POLR2M; unlike conventional Pol II, Pol II(G) functions as a transcriptional repressor. Part of TBP-based Pol II pre-initiation complex (PIC), in which Pol II core assembles with general transcription factors and other specific initiation factors including GTF2E1, GTF2E2, GTF2F1, GTF2F2, TCEA1, ERCC2, ERCC3, GTF2H2, GTF2H3, GTF2H4, GTF2H5, GTF2A1, GTF2A2, GTF2B and TBP; this large multi-subunit PIC complex mediates DNA unwinding and targets Pol II core to the transcription start site where the first phosphodiester bond forms.

The protein resides in the nucleus. The protein localises to the nucleolus. Functionally, DNA-dependent RNA polymerase catalyzes the transcription of DNA into RNA using the four ribonucleoside triphosphates as substrates. Component of RNA polymerase II which synthesizes mRNA precursors and many functional non-coding RNAs. Pol II is the central component of the basal RNA polymerase II transcription machinery. It is composed of mobile elements that move relative to each other. POLR2I/RPB9 is part of the upper jaw surrounding the central large cleft and thought to grab the incoming DNA template. This Bos taurus (Bovine) protein is DNA-directed RNA polymerase II subunit RPB9 (POLR2I).